The chain runs to 399 residues: Tryptophan synthase beta chain (399 aa).

Position 86 is an N6-(pyridoxal phosphate)lysine (lysine 86).

The protein belongs to the TrpB family. In terms of assembly, tetramer of two alpha and two beta chains. The cofactor is pyridoxal 5'-phosphate.

It catalyses the reaction (1S,2R)-1-C-(indol-3-yl)glycerol 3-phosphate + L-serine = D-glyceraldehyde 3-phosphate + L-tryptophan + H2O. It participates in amino-acid biosynthesis; L-tryptophan biosynthesis; L-tryptophan from chorismate: step 5/5. In terms of biological role, the beta subunit is responsible for the synthesis of L-tryptophan from indole and L-serine. The protein is Tryptophan synthase beta chain (trpB) of Buchnera aphidicola subsp. Schizaphis graminum (strain Sg).